The following is a 140-amino-acid chain: 3-hydroxyacyl-[acyl-carrier-protein] dehydratase FabZ (140 aa).

His-48 is a catalytic residue.

Belongs to the thioester dehydratase family. FabZ subfamily.

The protein resides in the cytoplasm. The catalysed reaction is a (3R)-hydroxyacyl-[ACP] = a (2E)-enoyl-[ACP] + H2O. In terms of biological role, involved in unsaturated fatty acids biosynthesis. Catalyzes the dehydration of short chain beta-hydroxyacyl-ACPs and long chain saturated and unsaturated beta-hydroxyacyl-ACPs. The sequence is that of 3-hydroxyacyl-[acyl-carrier-protein] dehydratase FabZ from Exiguobacterium sibiricum (strain DSM 17290 / CCUG 55495 / CIP 109462 / JCM 13490 / 255-15).